The sequence spans 102 residues: Citrate lyase acyl carrier protein (102 aa).

The residue at position 14 (Ser-14) is an O-(phosphoribosyl dephospho-coenzyme A)serine.

Belongs to the CitD family. In terms of assembly, oligomer with a subunit composition of (alpha,beta,gamma)6.

Its subcellular location is the cytoplasm. Its function is as follows. Covalent carrier of the coenzyme of citrate lyase. This is Citrate lyase acyl carrier protein from Streptococcus pyogenes serotype M2 (strain MGAS10270).